The primary structure comprises 334 residues: Biotin synthase (334 aa).

The Radical SAM core domain maps to 54-281 (QAIQLSTLLS…KSYVRLSAGR (228 aa)). Residues Cys69, Cys73, and Cys76 each coordinate [4Fe-4S] cluster. Residues Cys113, Cys144, Cys204, and Arg276 each contribute to the [2Fe-2S] cluster site.

It belongs to the radical SAM superfamily. Biotin synthase family. Homodimer. The cofactor is [4Fe-4S] cluster. Requires [2Fe-2S] cluster as cofactor.

It carries out the reaction (4R,5S)-dethiobiotin + (sulfur carrier)-SH + 2 reduced [2Fe-2S]-[ferredoxin] + 2 S-adenosyl-L-methionine = (sulfur carrier)-H + biotin + 2 5'-deoxyadenosine + 2 L-methionine + 2 oxidized [2Fe-2S]-[ferredoxin]. The protein operates within cofactor biosynthesis; biotin biosynthesis; biotin from 7,8-diaminononanoate: step 2/2. In terms of biological role, catalyzes the conversion of dethiobiotin (DTB) to biotin by the insertion of a sulfur atom into dethiobiotin via a radical-based mechanism. In Haemophilus ducreyi (strain 35000HP / ATCC 700724), this protein is Biotin synthase.